The primary structure comprises 136 residues: Histone H3 (136 aa).

Residues 1–43 (MARTKQTARKNVGGKAPRKHIGQKSARKTASTTAGMKKPHRYR) are disordered. Residue lysine 10 is modified to N6-methylated lysine. 2 positions are modified to N6-acetyllysine: lysine 15 and lysine 24. Basic residues predominate over residues 16 to 27 (APRKHIGQKSAR). Lysine 28 and lysine 37 each carry N6-methylated lysine.

This sequence belongs to the histone H3 family. In terms of assembly, the nucleosome is a histone octamer containing two molecules each of H2A, H2B, H3 and H4 assembled in one H3-H4 heterotetramer and two H2A-H2B heterodimers. The octamer wraps approximately 147 bp of DNA.

The protein resides in the nucleus. It localises to the chromosome. In terms of biological role, core component of nucleosome. Nucleosomes wrap and compact DNA into chromatin, limiting DNA accessibility to the cellular machineries which require DNA as a template. Histones thereby play a central role in transcription regulation, DNA repair, DNA replication and chromosomal stability. DNA accessibility is regulated via a complex set of post-translational modifications of histones, also called histone code, and nucleosome remodeling. This Euplotes crassus protein is Histone H3.